A 238-amino-acid chain; its full sequence is Ribonuclease PH (238 aa).

Residues Arg86 and 124-126 each bind phosphate; that span reads GTR.

This sequence belongs to the RNase PH family. As to quaternary structure, homohexameric ring arranged as a trimer of dimers.

It catalyses the reaction tRNA(n+1) + phosphate = tRNA(n) + a ribonucleoside 5'-diphosphate. Its function is as follows. Phosphorolytic 3'-5' exoribonuclease that plays an important role in tRNA 3'-end maturation. Removes nucleotide residues following the 3'-CCA terminus of tRNAs; can also add nucleotides to the ends of RNA molecules by using nucleoside diphosphates as substrates, but this may not be physiologically important. Probably plays a role in initiation of 16S rRNA degradation (leading to ribosome degradation) during starvation. The protein is Ribonuclease PH of Yersinia enterocolitica serotype O:8 / biotype 1B (strain NCTC 13174 / 8081).